The sequence spans 554 residues: uncharacterized protein (554 aa).

A signal peptide spans 1-33; it reads MKKILIIILFIIIFIVLIYSGLWFVIMFSLSHS.

This is an uncharacterized protein from Rickettsia prowazekii (strain Madrid E).